A 416-amino-acid chain; its full sequence is Protein PBN1 (416 aa).

Residues 1-385 lie on the Lumenal side of the membrane; that stretch reads MVTRHRVTVL…PDTKDYSKIK (385 aa). N-linked (GlcNAc...) asparagine glycosylation is found at Asn24, Asn85, Asn120, Asn212, and Asn365. A helical; Signal-anchor for type III membrane protein membrane pass occupies residues 386–405; it reads NGTLLCLLISIIYIFSKVFG. Topologically, residues 406–416 are cytoplasmic; it reads NNKKKRSVKRE.

This sequence belongs to the PIGX family. N-glycosylated.

Its subcellular location is the endoplasmic reticulum membrane. It participates in glycolipid biosynthesis; glycosylphosphatidylinositol-anchor biosynthesis. Its function is as follows. Required for proper folding and/or the stability of a subset of proteins in the endoplasmic reticulum. Aids the autocatalytic processing of PRB1. Component of glycosylphosphatidylinositol-mannosyltransferase 1 which transfers the first of the 4 mannoses in the GPI-anchor precursors during GPI-anchor biosynthesis. Probably acts by stabilizing the mannosyltransferase GPI14. The protein is Protein PBN1 (PBN1) of Saccharomyces cerevisiae (strain ATCC 204508 / S288c) (Baker's yeast).